Here is an 80-residue protein sequence, read N- to C-terminus: Small ribosomal subunit protein uS17c (80 aa).

Belongs to the universal ribosomal protein uS17 family. Part of the 30S ribosomal subunit.

It is found in the plastid. Its subcellular location is the chloroplast. In terms of biological role, one of the primary rRNA binding proteins, it binds specifically to the 5'-end of 16S ribosomal RNA. This Gracilaria tenuistipitata var. liui (Red alga) protein is Small ribosomal subunit protein uS17c (rps17).